A 451-amino-acid chain; its full sequence is AP-4 complex subunit mu (451 aa).

Positions 184 to 450 (REEIFVDIIE…VTQANSYVAR (267 aa)) constitute an MHD domain.

This sequence belongs to the adaptor complexes medium subunit family. In terms of assembly, adaptor protein complex 4 (AP-4) is a heterotetramer composed of two large adaptins (epsilon-type subunit and beta-type subunit), a medium adaptin (mu-type subunit) and a small adaptin (sigma-type subunit).

Its subcellular location is the golgi apparatus. It localises to the trans-Golgi network. The protein localises to the membrane. It is found in the coated pit. Its function is as follows. Subunit of novel type of clathrin- or non-clathrin-associated protein coat involved in targeting proteins from the trans-Golgi network (TGN) to the endosomal-lysosomal system. The sequence is that of AP-4 complex subunit mu (AP4M) from Arabidopsis thaliana (Mouse-ear cress).